The chain runs to 348 residues: Sesquiterpene synthase MGU_11447 (348 aa).

Residues aspartate 91 and aspartate 96 each contribute to the Mg(2+) site. The DDXXXD motif motif lies at aspartate 91–aspartate 96. Residue arginine 184 coordinates substrate. Mg(2+) is bound by residues asparagine 230, serine 234, and glutamate 238.

This sequence belongs to the terpene synthase family. The cofactor is Mg(2+).

The enzyme catalyses (2E,6E)-farnesyl diphosphate + H2O = (+)-corvol ether B + diphosphate. The catalysed reaction is (2E,6E)-farnesyl diphosphate + H2O = (+)-corvol ether A + diphosphate. Terpene synthase that catalyzes the conversion of (2E,6E)-farnesyl diphosphate (FPP) into sesquiterpenes which are important for fungi-environment interactions. Produces a mixture consisting of 8 sesquiterpenes including corvol ethers A and B, as well as traces of epizonarene, gamma-cadinene, delta-cadinene, alpha-cadinene, alpha-cadinol, and an unidentified sesquiterpene. Produces both corvol ether A and corvol ether B in similar concentrations. This Metarhizium guizhouense (strain ARSEF 977) protein is Sesquiterpene synthase MGU_11447.